Consider the following 59-residue polypeptide: UPF0434 protein lpg1920 (59 aa).

Belongs to the UPF0434 family.

This Legionella pneumophila subsp. pneumophila (strain Philadelphia 1 / ATCC 33152 / DSM 7513) protein is UPF0434 protein lpg1920.